Reading from the N-terminus, the 464-residue chain is Bifunctional protein GlmU (464 aa).

A pyrophosphorylase region spans residues 1-236; the sequence is MRAVILAAGL…PTEALGVNTR (236 aa). Residues 6 to 9, Lys-20, and 77 to 78 each bind UDP-N-acetyl-alpha-D-glucosamine; these read LAAG and GT. Asp-102 is a binding site for Mg(2+). UDP-N-acetyl-alpha-D-glucosamine contacts are provided by Gly-145, Glu-161, Asn-176, and Asn-234. Asn-234 provides a ligand contact to Mg(2+). Positions 237–257 are linker; the sequence is WDLALVENVIKLKIARYWAER. The N-acetyltransferase stretch occupies residues 258–464; sequence GVTVHYPETV…GRGKKKLQKD (207 aa). UDP-N-acetyl-alpha-D-glucosamine contacts are provided by Arg-340 and Lys-358. His-370 (proton acceptor) is an active-site residue. The UDP-N-acetyl-alpha-D-glucosamine site is built by Tyr-373 and Asn-384. Acetyl-CoA contacts are provided by residues Ala-387, 393–394, Ser-412, Gly-430, and Arg-447; that span reads NY.

It in the N-terminal section; belongs to the N-acetylglucosamine-1-phosphate uridyltransferase family. In the C-terminal section; belongs to the transferase hexapeptide repeat family. In terms of assembly, homotrimer. Requires Mg(2+) as cofactor.

The protein localises to the cytoplasm. The catalysed reaction is alpha-D-glucosamine 1-phosphate + acetyl-CoA = N-acetyl-alpha-D-glucosamine 1-phosphate + CoA + H(+). It catalyses the reaction N-acetyl-alpha-D-glucosamine 1-phosphate + UTP + H(+) = UDP-N-acetyl-alpha-D-glucosamine + diphosphate. It participates in nucleotide-sugar biosynthesis; UDP-N-acetyl-alpha-D-glucosamine biosynthesis; N-acetyl-alpha-D-glucosamine 1-phosphate from alpha-D-glucosamine 6-phosphate (route II): step 2/2. The protein operates within nucleotide-sugar biosynthesis; UDP-N-acetyl-alpha-D-glucosamine biosynthesis; UDP-N-acetyl-alpha-D-glucosamine from N-acetyl-alpha-D-glucosamine 1-phosphate: step 1/1. Its pathway is bacterial outer membrane biogenesis; LPS lipid A biosynthesis. Catalyzes the last two sequential reactions in the de novo biosynthetic pathway for UDP-N-acetylglucosamine (UDP-GlcNAc). The C-terminal domain catalyzes the transfer of acetyl group from acetyl coenzyme A to glucosamine-1-phosphate (GlcN-1-P) to produce N-acetylglucosamine-1-phosphate (GlcNAc-1-P), which is converted into UDP-GlcNAc by the transfer of uridine 5-monophosphate (from uridine 5-triphosphate), a reaction catalyzed by the N-terminal domain. The chain is Bifunctional protein GlmU from Aquifex aeolicus (strain VF5).